The chain runs to 115 residues: Protein SPIRAL1-like 2 (115 aa).

The disordered stretch occupies residues 29–48 (AKAKPAAAAEKETTPAPVKK).

The protein belongs to the SPIRAL1 family.

Functionally, acts in maintaining the cortical microtubules organization essential for anisotropic cell growth. This Oryza sativa subsp. japonica (Rice) protein is Protein SPIRAL1-like 2.